The primary structure comprises 94 residues: UPF0235 protein TON_0641 (94 aa).

It belongs to the UPF0235 family.

This Thermococcus onnurineus (strain NA1) protein is UPF0235 protein TON_0641.